The primary structure comprises 1051 residues: Carbamoyl phosphate synthase large chain (1051 aa).

A carboxyphosphate synthetic domain region spans residues 1–399; the sequence is MKETPKKVLV…SLQKAVRMLD (399 aa). Residues Arg-127, Arg-167, Gly-173, Gly-174, Lys-206, Leu-208, Glu-213, Gly-239, Val-240, His-241, Gln-282, and Glu-296 each coordinate ATP. Residues 131 to 325 form the ATP-grasp 1 domain; sequence RETMIENNLP…LAYVSAKLAL (195 aa). The Mg(2+) site is built by Gln-282, Glu-296, and Asn-298. 3 residues coordinate Mn(2+): Gln-282, Glu-296, and Asn-298. The interval 400 to 548 is oligomerization domain; it reads IGEPGVVGGK…LTYNGTEDDL (149 aa). Residues 549-930 form a carbamoyl phosphate synthetic domain region; that stretch reads EFSQGNKLLM…LKSWLSSIPN (382 aa). Residues 673–863 form the ATP-grasp 2 domain; that stretch reads SKLLDKLGIS…LINESMKAIF (191 aa). Residues Arg-709, Lys-748, Ile-750, Glu-755, Gly-779, Val-780, His-781, Ser-782, Gln-822, and Glu-834 each contribute to the ATP site. Positions 822, 834, and 836 each coordinate Mg(2+). Residues Gln-822, Glu-834, and Asn-836 each contribute to the Mn(2+) site. In terms of domain architecture, MGS-like spans 930-1051; the sequence is NRIPNKNGIA…FEISEYGGGI (122 aa). Residues 931–1051 are allosteric domain; it reads RIPNKNGIAL…FEISEYGGGI (121 aa).

It belongs to the CarB family. As to quaternary structure, composed of two chains; the small (or glutamine) chain promotes the hydrolysis of glutamine to ammonia, which is used by the large (or ammonia) chain to synthesize carbamoyl phosphate. Tetramer of heterodimers (alpha,beta)4. Mg(2+) is required as a cofactor. It depends on Mn(2+) as a cofactor.

The catalysed reaction is hydrogencarbonate + L-glutamine + 2 ATP + H2O = carbamoyl phosphate + L-glutamate + 2 ADP + phosphate + 2 H(+). It carries out the reaction hydrogencarbonate + NH4(+) + 2 ATP = carbamoyl phosphate + 2 ADP + phosphate + 2 H(+). It functions in the pathway amino-acid biosynthesis; L-arginine biosynthesis; carbamoyl phosphate from bicarbonate: step 1/1. It participates in pyrimidine metabolism; UMP biosynthesis via de novo pathway; (S)-dihydroorotate from bicarbonate: step 1/3. Functionally, large subunit of the glutamine-dependent carbamoyl phosphate synthetase (CPSase). CPSase catalyzes the formation of carbamoyl phosphate from the ammonia moiety of glutamine, carbonate, and phosphate donated by ATP, constituting the first step of 2 biosynthetic pathways, one leading to arginine and/or urea and the other to pyrimidine nucleotides. The large subunit (synthetase) binds the substrates ammonia (free or transferred from glutamine from the small subunit), hydrogencarbonate and ATP and carries out an ATP-coupled ligase reaction, activating hydrogencarbonate by forming carboxy phosphate which reacts with ammonia to form carbamoyl phosphate. The protein is Carbamoyl phosphate synthase large chain of Saccharolobus islandicus (strain M.16.4 / Kamchatka #3) (Sulfolobus islandicus).